A 356-amino-acid chain; its full sequence is tRNA N6-adenosine threonylcarbamoyltransferase (356 aa).

Fe cation is bound by residues His-110 and His-114. Residues 133-137 (LVSGG), Asp-166, Gly-179, and Asn-276 contribute to the substrate site. Asp-304 is a Fe cation binding site.

This sequence belongs to the KAE1 / TsaD family. It depends on Fe(2+) as a cofactor.

The protein resides in the cytoplasm. The enzyme catalyses L-threonylcarbamoyladenylate + adenosine(37) in tRNA = N(6)-L-threonylcarbamoyladenosine(37) in tRNA + AMP + H(+). In terms of biological role, required for the formation of a threonylcarbamoyl group on adenosine at position 37 (t(6)A37) in tRNAs that read codons beginning with adenine. Is involved in the transfer of the threonylcarbamoyl moiety of threonylcarbamoyl-AMP (TC-AMP) to the N6 group of A37, together with TsaE and TsaB. TsaD likely plays a direct catalytic role in this reaction. This Teredinibacter turnerae (strain ATCC 39867 / T7901) protein is tRNA N6-adenosine threonylcarbamoyltransferase.